A 302-amino-acid chain; its full sequence is Pyridoxal 5'-phosphate synthase subunit PdxS (302 aa).

Position 32 (aspartate 32) interacts with D-ribose 5-phosphate. Residue lysine 89 is the Schiff-base intermediate with D-ribose 5-phosphate of the active site. Glycine 161 contributes to the D-ribose 5-phosphate binding site. Arginine 173 contacts D-glyceraldehyde 3-phosphate. Residues glycine 222 and 243–244 each bind D-ribose 5-phosphate; that span reads GS. A disordered region spans residues 275 to 302; sequence IAKNPGKGMKGQANADLDEEEQLQGRGV.

The protein belongs to the PdxS/SNZ family. As to quaternary structure, in the presence of PdxT, forms a dodecamer of heterodimers.

The enzyme catalyses aldehydo-D-ribose 5-phosphate + D-glyceraldehyde 3-phosphate + L-glutamine = pyridoxal 5'-phosphate + L-glutamate + phosphate + 3 H2O + H(+). The protein operates within cofactor biosynthesis; pyridoxal 5'-phosphate biosynthesis. Functionally, catalyzes the formation of pyridoxal 5'-phosphate from ribose 5-phosphate (RBP), glyceraldehyde 3-phosphate (G3P) and ammonia. The ammonia is provided by the PdxT subunit. Can also use ribulose 5-phosphate and dihydroxyacetone phosphate as substrates, resulting from enzyme-catalyzed isomerization of RBP and G3P, respectively. This is Pyridoxal 5'-phosphate synthase subunit PdxS from Haloarcula marismortui (strain ATCC 43049 / DSM 3752 / JCM 8966 / VKM B-1809) (Halobacterium marismortui).